Reading from the N-terminus, the 732-residue chain is Cullin-3A (732 aa).

The Cullin neddylation domain occupies aspartate 662–aspartate 724. Lysine 676 participates in a covalent cross-link: Glycyl lysine isopeptide (Lys-Gly) (interchain with G-Cter in NEDD8).

This sequence belongs to the cullin family. As to quaternary structure, interacts with CSN2 and RBX1A. Interacts with BTB/POZ domain-containing proteins BPM1, BPM2, BPM3, BPM6, BT1, BT2, BT3, BT5, AT1G01640, AT1G21780 and AT5G48510. Interacts with SR1IP1. Interacts with NPR3 and NPR4. Binds to NPR1; this interaction requires NPR3 and NPR4. In terms of processing, neddylated. Deneddylated via its interaction with the COP9 signalosome (CSN) complex.

Component of the cullin-RING ubiquitin ligases (CRL), or CUL3-RBX1-BTB protein E3 ligase complexes which mediate the ubiquitination and subsequent proteasomal degradation of target proteins. The functional specificity of the CRL complex depends on the BTB domain-containing protein as the substrate recognition component. Involved in embryo pattern formation and endosperm development. Required for the normal division and organization of the root stem cells and columella root cap cells. Regulates primary root growth by an unknown pathway, but in an ethylene-dependent manner. Functions in distal root patterning, by an ethylene-independent mechanism. Functionally redundant with CUL3B. The protein is Cullin-3A of Arabidopsis thaliana (Mouse-ear cress).